The chain runs to 800 residues: Phenylalanine--tRNA ligase beta subunit (800 aa).

The tRNA-binding domain occupies 39–154 (SKDIKNLVVG…TEVEPGTDAL (116 aa)). The region spanning 408-483 (SFVTPIDITA…RIYGYDEIPS (76 aa)) is the B5 domain. Mg(2+) contacts are provided by D461, D467, E470, and E471. The 93-residue stretch at 708-800 (PKFPGVTRDI…ALQAQGATIR (93 aa)) folds into the FDX-ACB domain.

It belongs to the phenylalanyl-tRNA synthetase beta subunit family. Type 1 subfamily. As to quaternary structure, tetramer of two alpha and two beta subunits. Mg(2+) is required as a cofactor.

It localises to the cytoplasm. The catalysed reaction is tRNA(Phe) + L-phenylalanine + ATP = L-phenylalanyl-tRNA(Phe) + AMP + diphosphate + H(+). This Staphylococcus haemolyticus (strain JCSC1435) protein is Phenylalanine--tRNA ligase beta subunit.